Reading from the N-terminus, the 652-residue chain is MYFRIRKLDEPDSNDNDFYVVIPVKDIFTWFCSIYSLDKTSIFIHDINNLNPNEYTIQQVIPGSDISPIKNLNEYLTNDIIITNTLDLNDLETFIYLLTNGANNSEGIKLLVTWCVYYGRLDVLNYLVDNNILPTENTLRDYLPITISENHDEVYKFIIDHEFHLGYKSNNLSWILTSEYKYINSLKYTLSNDLKLSDLIFMHHLKVEILQELFSSGYEFDNRLFEKICRTTNITLIKFFMDIGFDPMNIVIQPNQLCIYLANILLDSGRQFTQNEISQIITFSIVSDDYWDIIAFTERTGYNWNNINDNFINCIIRRGSLDHLKDILNRTSLNINRFIDNIVITAIFDSRKDLIMYAYENNVDIAKYIQSLPYSNDTNFIKWYIELLNSDGNFKSDNNIINFINHGTGTHKFEILKYLLENDCYEDPNYIIEHICCPFNIGKNNTDIHEPIVVELLNLCESKQIDVPKLTPIIISNYLLSNRKISNTLLKFGTTIYSDGIIDNDSDINNILLNIINNQCEEIKDYVYNKPQLWTNKSIMLATIISENIDLFDFLLELNRDNNLYLEQSFILCANSIKMLKHFVNSINLDITSRVRETYVYAYSIIKNKSVASYLLLYYGNDMIYDSDNIFENQKNLFVNDFLREIKNLNFV.

ANK repeat units follow at residues 77–105 (TNDI…ANNS), 106–136 (EGIK…LPTE), 138–167 (TLRD…HLGY), 192–219 (NDLK…SGYE), 220–242 (FDNR…FFMD), 243–274 (IGFD…QFTQ), 307–337 (INDN…NINR), 396–430 (SDNN…DPNY), 468–498 (PKLT…TIYS), and 535–564 (TNKS…DNNL).

The protein is Putative ankyrin repeat protein R734 of Acanthamoeba polyphaga mimivirus (APMV).